Here is a 534-residue protein sequence, read N- to C-terminus: T-complex protein 1 subunit gamma (534 aa).

Met-1 carries the post-translational modification N-acetylmethionine. A Phosphoserine modification is found at Ser-257. Cys-371 and Cys-377 are oxidised to a cystine.

The protein belongs to the TCP-1 chaperonin family. In terms of assembly, heterooligomeric complex of about 850 to 900 kDa that forms two stacked rings, 12 to 16 nm in diameter.

It is found in the cytoplasm. Its function is as follows. Molecular chaperone; assists the folding of proteins upon ATP hydrolysis. Known to play a role, in vitro, in the folding of actin and tubulin. In yeast may play a role in mitotic spindle formation. This Saccharomyces cerevisiae (strain ATCC 204508 / S288c) (Baker's yeast) protein is T-complex protein 1 subunit gamma (CCT3).